The chain runs to 344 residues: Trace amine-associated receptor 8b (344 aa).

Residues 1-33 are Extracellular-facing; it reads MTSNFSQATLQLCYENVNASCIKTPYSPGLRVL. Residues Asn4 and Asn18 are each glycosylated (N-linked (GlcNAc...) asparagine). 2 cysteine pairs are disulfide-bonded: Cys21/Cys185 and Cys104/Cys189. Residues 34 to 54 traverse the membrane as a helical segment; that stretch reads LYMVFGFGAVLAVCGNLLVVI. Residues 55-67 are Cytoplasmic-facing; the sequence is SVLHFKQLHSPAN. Residues 68-88 form a helical membrane-spanning segment; the sequence is FLIASLASADFLVGISVMPFS. Residues 89–102 are Extracellular-facing; it reads MVRSIESCWYFGDT. Residues 103–127 traverse the membrane as a helical segment; it reads FCSLHSCCDAAFCYSSLFHLCFISV. Residues 128 to 146 lie on the Cytoplasmic side of the membrane; the sequence is DRYIAVTEPLVYPTKFTMS. A helical transmembrane segment spans residues 147-167; that stretch reads VSGICISISWILPLVYSSAVF. Over 168-196 the chain is Extracellular; sequence YTGISATGIENLVSALNCVGGCQVAINQD. The chain crosses the membrane as a helical span at residues 197 to 217; that stretch reads WVLISFLLFFIPTLVMIILYS. At 218–256 the chain is on the cytoplasmic side; that stretch reads KIFLVAKQQAVKIETSISGSKGESSLESHKARVAKRERK. A helical transmembrane segment spans residues 257 to 277; it reads AAKTLGVTVMAFMVSWLPYTI. Over 278–295 the chain is Extracellular; it reads DTLIDAFMGFITPAYVYE. Residues 296–319 traverse the membrane as a helical segment; that stretch reads ICGWIAYYNSAMNPLIYAFFYPWF. Residues 320 to 344 are Cytoplasmic-facing; it reads RKAIKLILSGKILKGHSSTTSLFSE.

The protein belongs to the G-protein coupled receptor 1 family.

The protein localises to the cell membrane. Functionally, olfactory receptor activated by trace amines. Trace amine compounds are enriched in animal body fluids and act on trace amine-associated receptors (TAARs) to elicit both intraspecific and interspecific innate behaviors. Ligand-binding causes a conformation change that triggers signaling via G(s)-class of G alpha proteins (GNAL or GNAS). This is Trace amine-associated receptor 8b from Rattus norvegicus (Rat).